The primary structure comprises 668 residues: Protein brown (668 aa).

The Cytoplasmic portion of the chain corresponds to 1 to 412; the sequence is MPMDEGDAQG…TEDLANIRSG (412 aa). The region spanning 31–328 is the ABC transporter domain; sequence YSFWNECRKQ…FTEGFMQPKN (298 aa). Residue 63 to 70 coordinates ATP; sequence GGSGAGKT. A helical transmembrane segment spans residues 413–433; it reads LIGFGFFMTTAVTLSLMYSGV. Residues 434–453 are Extracellular-facing; that stretch reads GGLTQRTVQDVGGSIFMLSN. The chain crosses the membrane as a helical span at residues 454–474; sequence EMIFTFSYGVTYIFPAALPII. Over 475-490 the chain is Cytoplasmic; it reads RREVAEGTYSLSAYYV. The helical transmembrane segment at 491 to 511 threads the bilayer; it reads ALVLSFVPVAFFKGYMFLSVI. Residues 512–524 are Extracellular-facing; sequence YASIYYTRGFLLY. Residues 525–545 traverse the membrane as a helical segment; the sequence is ITMGFLMSLSAIAAVGYGVFL. Residues 546–561 are Cytoplasmic-facing; sequence SSLFETDKMASECAAP. Residues 562–582 traverse the membrane as a helical segment; it reads FDLIFLIFGGTYMNVDSVPLL. Over 583–637 the chain is Extracellular; it reads KYFSLFFYSNEALMYNFWIDIDNIACXVNDEHPCCQTGLEVLQQASFRTADYTFW. A helical transmembrane segment spans residues 638–658; that stretch reads LDCASLLVVALVFHIVSFTLI. Over 659–668 the chain is Cytoplasmic; sequence RRYINRSGYY.

This sequence belongs to the ABC transporter superfamily. ABCG family. Eye pigment precursor importer (TC 3.A.1.204) subfamily. May form a heterodimer with w/white. In terms of tissue distribution, expressed in eyes.

The protein localises to the membrane. The enzyme catalyses guanine(out) + ATP + H2O = guanine(in) + ADP + phosphate + H(+). It catalyses the reaction riboflavin(in) + ATP + H2O = riboflavin(out) + ADP + phosphate + H(+). The catalysed reaction is (6S)-5,6,7,8-tetrahydrofolate(out) + ATP + H2O = (6S)-5,6,7,8-tetrahydrofolate(in) + ADP + phosphate + H(+). Functionally, ATP-dependent transporter of the ATP-binding cassette (ABC) family which transports various molecules including bioamines, neurotransmitters and metabolic intermediates. In the eye and probably in association with w/white, required for the transport of the eye red pigment precursor, guanine, into pigment cell granules. In Malpighian tubules, involved in guanine uptake. Probably in association with w/white, involved in aging-induced intestinal stem cell proliferation in the midgut by regulating tetrahydrofolate transport. The protein is Protein brown of Drosophila virilis (Fruit fly).